A 503-amino-acid polypeptide reads, in one-letter code: ATP synthase subunit alpha (503 aa).

Residue 169–176 (GDRGTGKT) coordinates ATP.

Belongs to the ATPase alpha/beta chains family. As to quaternary structure, F-type ATPases have 2 components, CF(1) - the catalytic core - and CF(0) - the membrane proton channel. CF(1) has five subunits: alpha(3), beta(3), gamma(1), delta(1), epsilon(1). CF(0) has three main subunits: a(1), b(2) and c(9-12). The alpha and beta chains form an alternating ring which encloses part of the gamma chain. CF(1) is attached to CF(0) by a central stalk formed by the gamma and epsilon chains, while a peripheral stalk is formed by the delta and b chains.

The protein resides in the cell inner membrane. It carries out the reaction ATP + H2O + 4 H(+)(in) = ADP + phosphate + 5 H(+)(out). Produces ATP from ADP in the presence of a proton gradient across the membrane. The alpha chain is a regulatory subunit. This is ATP synthase subunit alpha from Leptospira interrogans serogroup Icterohaemorrhagiae serovar copenhageni (strain Fiocruz L1-130).